The chain runs to 537 residues: MRLAYWIYEGTAHHGIGRIANSLKGVHAVFHAPLGDDYVNVIHTMLERTPNFPRATTSVVTGRDLAQGTNRLPDTLRQVEERFKPELIIVSASCSTTLLQENLQLIVGNANIDTEVFIYEVNPFRVQETEAAEGLFTALVKKYAEKQDLTEEPSINIIGPASLGFHVRSDVTSLRRMMATLGVKINVVAPYSAGLADLKKLPAAWLNVVPYQELGHGAAEHLEEKFGMSSMYDTPLGIQPTMKWLNELIEKLNAIGAKNGKSSNLKMPPLTAFSFDGMSAPSGVPWFTHSADMESFSMKRAFVFGDATRTVAMVKFLRDELGMEICGAGTYLHKHAAWVREQLAGYLPDDLIVTEEFQEIAKRIEADMPDLVCGTQMERHSCRKVDVPCMVTSAPTHIENHLLGYYPMLGFDGADVIADRVYTTSKLGLEKHLIDFFGDAGLEYEEEQQEKVAEPALATAGETAGQATEAATAPATPGAPLTGEPVWAADGEAMLKKIPFFVRKKAKLNTETFAKENGYATITAEVVRLTKESLGGG.

D36 provides a ligand contact to [4Fe-4S] cluster. D292 serves as the catalytic Proton donor. 428-429 (GL) lines the substrate pocket. Residues 459–483 (TAGETAGQATEAATAPATPGAPLTG) are disordered.

Belongs to the ChlB/BchB/BchZ family. In terms of assembly, protochlorophyllide reductase is composed of three subunits; BchL, BchN and BchB. Forms a heterotetramer of two BchB and two BchN subunits. The cofactor is [4Fe-4S] cluster.

The catalysed reaction is chlorophyllide a + oxidized 2[4Fe-4S]-[ferredoxin] + 2 ADP + 2 phosphate = protochlorophyllide a + reduced 2[4Fe-4S]-[ferredoxin] + 2 ATP + 2 H2O. The protein operates within porphyrin-containing compound metabolism; bacteriochlorophyll biosynthesis (light-independent). Functionally, component of the dark-operative protochlorophyllide reductase (DPOR) that uses Mg-ATP and reduced ferredoxin to reduce ring D of protochlorophyllide (Pchlide) to form chlorophyllide a (Chlide). This reaction is light-independent. The NB-protein (BchN-BchB) is the catalytic component of the complex. The protein is Light-independent protochlorophyllide reductase subunit B of Chloroherpeton thalassium (strain ATCC 35110 / GB-78).